The sequence spans 157 residues: CAPA peptides (157 aa).

An N-terminal signal peptide occupies residues 1 to 21 (MQPTMRIIVSMALLAYAVASA). Residues 22-28 (YHSNVKL) constitute a propeptide that is removed on maturation. Valine 42 is modified (valine amide). The propeptide occupies 45–66 (ASGNTWQLPLNDLYPEYEPAQV). A Pyrrolidone carboxylic acid; partial modification is found at glutamine 69. Position 76 is a valine amide (valine 76). Residues leucine 85 and leucine 117 each carry the leucine amide modification. Positions 120–157 (AFKNDDDEITIQNESNDHSEPEQTELIHEDRRKRQTLN) are excised as a propeptide. The segment at 131–157 (QNESNDHSEPEQTELIHEDRRKRQTLN) is disordered. Residues 134–151 (SNDHSEPEQTELIHEDRR) show a composition bias toward basic and acidic residues.

Belongs to the pyrokinin family. In terms of tissue distribution, CAPA-periviscerokinin 1: Expressed in corpora cardiaca (CC), corpora allata (CA), antennal lobe (AL) and gnathal ganglion (GNG) (at protein level). Expression detected in most animals in CC and CA and in some animals in AL and GNG (at protein level). CAPA-periviscerokinin 2: Expressed in corpora cardiaca (CC), corpora allata (CA), antennal lobe (AL) and gnathal ganglion (GNG) (at protein level). For non-pyroglutamate form, expression in AL detected in all animals, in CC, CA and GNG in most animals (at protein level). For pyroglutamate form, expression in CC and CA detected in most animals, in AL and GNG in some animals (at protein level). CAPA-periviscerokinin 3: Expressed in corpora cardiaca (CC), corpora allata (CA), antennal lobe (AL) and gnathal ganglion (GNG). Expression detected in most animals in CC and CA and in some animals in AL and GNG (at protein level). CAPA-precursor-related peptide 3: Expressed in corpora cardiaca (CC), corpora allata (CA), antennal lobe (AL) and gnathal ganglion (GNG) (at protein level). Expression in CC and CA detected in some animals, expression in Al and GNG detected in few animals (at protein level). CAPA-trypto-pyrokinin: Expressed in corpora cardiaca (CC), corpora allata (CA), antennal lobe (AL) and gnathal ganglion (GNG) (at protein level). Expression in CC, CA and GNG detected in most animals, in AL in some animals (at protein level).

Its subcellular location is the secreted. Functionally, myoactive. This chain is CAPA peptides, found in Agrotis ipsilon (Black cutworm moth).